A 382-amino-acid polypeptide reads, in one-letter code: MNLKEKTRALFAEIFSYPATHTIQAPGRVNLIGEHTDYNDGFVLPCAIDYQTVISCAPRNDRTVRVIAADYDNQVEEFSLDAPIVTHDSQQWSNYVRGVVKHLQQRNNAFGGVDMVISGNVPQGAGLSSSASLEVAVGTVFQQLYHLPLDGAQIALNGQEAENQFVGCNCGIMDQLISALGKKDHALLIDCRTLGAKAVSMPKGVAVVIINSNFKRTLVGSEYNTRREQCETGARFFQQPALRDVSLEAFNAVASELDPVVAKRVRHVLSENARTVEAASALEKGDLQRMGQLMAESHASMRDDFEITVPQIDTLVDIVKATIGDQGGVRMTGGGFGGCVVALIPEDLVPAVRQAVAQQYEAKTGIKETFYVCKPSQGAGQC.

34 to 37 is a substrate binding site; that stretch reads EHTD. 124-130 is a binding site for ATP; sequence GAGLSSS. Residues S130 and E162 each contribute to the Mg(2+) site. Residue D174 is the Proton acceptor of the active site. A substrate-binding site is contributed by Y223.

It belongs to the GHMP kinase family. GalK subfamily.

The protein localises to the cytoplasm. The catalysed reaction is alpha-D-galactose + ATP = alpha-D-galactose 1-phosphate + ADP + H(+). It functions in the pathway carbohydrate metabolism; galactose metabolism. Catalyzes the transfer of the gamma-phosphate of ATP to D-galactose to form alpha-D-galactose-1-phosphate (Gal-1-P). The protein is Galactokinase of Salmonella paratyphi C (strain RKS4594).